A 321-amino-acid polypeptide reads, in one-letter code: Glucokinase (321 aa).

8–13 is a binding site for ATP; that stretch reads GDVGGT.

This sequence belongs to the bacterial glucokinase family.

The protein resides in the cytoplasm. It carries out the reaction D-glucose + ATP = D-glucose 6-phosphate + ADP + H(+). The protein is Glucokinase of Shigella sonnei (strain Ss046).